Reading from the N-terminus, the 379-residue chain is Cinnamyl alcohol dehydrogenase 7 (379 aa).

Residues 1–13 (MAPTTTATAAAEQ) are compositionally biased toward low complexity. Positions 1–21 (MAPTTTATAAAEQAPPPQHTR) are disordered. Cys60 serves as a coordination point for Zn(2+). An NADP(+)-binding site is contributed by Ser62. Residues His82, Glu83, Cys113, Cys116, Cys119, Cys127, and Cys185 each contribute to the Zn(2+) site. Residues Thr189, 210–215 (GLGGLG), 233–238 (STSPVK), Thr273, Gly297, and 320–322 (SCM) each bind NADP(+).

It belongs to the zinc-containing alcohol dehydrogenase family. In terms of assembly, homodimer. Requires Zn(2+) as cofactor. As to expression, expressed in roots, first internodes and panicles. Expressed in the vascular bundles and sclerenchyma cells below the epidermis in leaves and stems.

The enzyme catalyses (E)-cinnamyl alcohol + NADP(+) = (E)-cinnamaldehyde + NADPH + H(+). It carries out the reaction (E)-coniferol + NADP(+) = (E)-coniferaldehyde + NADPH + H(+). It catalyses the reaction (E)-sinapyl alcohol + NADP(+) = (E)-sinapaldehyde + NADPH + H(+). The catalysed reaction is (E)-4-coumaroyl alcohol + NADP(+) = (E)-4-coumaraldehyde + NADPH + H(+). The enzyme catalyses (E)-caffeyl alcohol + NADP(+) = (E)-caffeyl aldehyde + NADPH + H(+). It participates in aromatic compound metabolism; phenylpropanoid biosynthesis. Functionally, involved in lignin biosynthesis. May catalyze the final step specific for the production of lignin monomers, like coniferyl alcohol, sinapyl alcohol and 4-coumaryl alcohol. The protein is Cinnamyl alcohol dehydrogenase 7 of Oryza sativa subsp. japonica (Rice).